The chain runs to 236 residues: Small ribosomal subunit protein uS3 (236 aa).

One can recognise a KH type-2 domain in the interval 39-107 (IREILHKELK…DVVINIVEIR (69 aa)). Residues 213–236 (MAQDKRMNEGGGESSQPRSRRDAA) form a disordered region.

Belongs to the universal ribosomal protein uS3 family. In terms of assembly, part of the 30S ribosomal subunit. Forms a tight complex with proteins S10 and S14.

Functionally, binds the lower part of the 30S subunit head. Binds mRNA in the 70S ribosome, positioning it for translation. This Bradyrhizobium sp. (strain BTAi1 / ATCC BAA-1182) protein is Small ribosomal subunit protein uS3.